Here is a 128-residue protein sequence, read N- to C-terminus: Aspartate 1-decarboxylase (128 aa).

Serine 25 serves as the catalytic Schiff-base intermediate with substrate; via pyruvic acid. Residue serine 25 is modified to Pyruvic acid (Ser). Threonine 57 contacts substrate. The active-site Proton donor is the tyrosine 58. Residue 73 to 75 (GSA) participates in substrate binding.

This sequence belongs to the PanD family. In terms of assembly, heterooctamer of four alpha and four beta subunits. The cofactor is pyruvate. In terms of processing, is synthesized initially as an inactive proenzyme, which is activated by self-cleavage at a specific serine bond to produce a beta-subunit with a hydroxyl group at its C-terminus and an alpha-subunit with a pyruvoyl group at its N-terminus.

The protein localises to the cytoplasm. It catalyses the reaction L-aspartate + H(+) = beta-alanine + CO2. The protein operates within cofactor biosynthesis; (R)-pantothenate biosynthesis; beta-alanine from L-aspartate: step 1/1. In terms of biological role, catalyzes the pyruvoyl-dependent decarboxylation of aspartate to produce beta-alanine. This chain is Aspartate 1-decarboxylase, found in Burkholderia multivorans (strain ATCC 17616 / 249).